Consider the following 109-residue polypeptide: NADH-quinone oxidoreductase subunit K (109 aa).

Transmembrane regions (helical) follow at residues 12–32 (LNHYLILSSLVFTIGMLGLFM), 40–60 (ILMSIELMLLAVNINFVAFSV), and 72–92 (IIILTIAAAETSIGLAILLIY).

It belongs to the complex I subunit 4L family. In terms of assembly, NDH-1 is composed of 14 different subunits. Subunits NuoA, H, J, K, L, M, N constitute the membrane sector of the complex.

Its subcellular location is the cell inner membrane. It carries out the reaction a quinone + NADH + 5 H(+)(in) = a quinol + NAD(+) + 4 H(+)(out). Its function is as follows. NDH-1 shuttles electrons from NADH, via FMN and iron-sulfur (Fe-S) centers, to quinones in the respiratory chain. The immediate electron acceptor for the enzyme in this species is believed to be ubiquinone. Couples the redox reaction to proton translocation (for every two electrons transferred, four hydrogen ions are translocated across the cytoplasmic membrane), and thus conserves the redox energy in a proton gradient. This Rickettsia bellii (strain RML369-C) protein is NADH-quinone oxidoreductase subunit K.